The chain runs to 116 residues: Non-specific lipid-transfer protein C, cotyledon-specific isoform (116 aa).

The signal sequence occupies residues 1 to 24 (MKNVVFSVLLLLSFLFCLANTNEA). Cystine bridges form between cysteine 28–cysteine 76, cysteine 38–cysteine 53, cysteine 54–cysteine 98, and cysteine 74–cysteine 112.

It belongs to the plant LTP family.

Its function is as follows. Plant non-specific lipid-transfer proteins transfer phospholipids as well as galactolipids across membranes. May play a role in wax or cutin deposition in the cell walls of expanding epidermal cells and certain secretory tissues. The protein is Non-specific lipid-transfer protein C, cotyledon-specific isoform of Ricinus communis (Castor bean).